The primary structure comprises 228 residues: Small ribosomal subunit protein uS3 (228 aa).

The region spanning 39–107 (TREYLQDKLK…PVHINIEEIR (69 aa)) is the KH type-2 domain.

This sequence belongs to the universal ribosomal protein uS3 family. As to quaternary structure, part of the 30S ribosomal subunit. Forms a tight complex with proteins S10 and S14.

In terms of biological role, binds the lower part of the 30S subunit head. Binds mRNA in the 70S ribosome, positioning it for translation. This is Small ribosomal subunit protein uS3 from Pseudomonas entomophila (strain L48).